Consider the following 154-residue polypeptide: Ribonuclease H (154 aa).

The RNase H type-1 domain occupies 5 to 146 (EQNIVYLYCD…ADELANRGID (142 aa)). Positions 14, 52, 74, and 138 each coordinate Mg(2+).

The protein belongs to the RNase H family. Monomer. The cofactor is Mg(2+).

The protein localises to the cytoplasm. The catalysed reaction is Endonucleolytic cleavage to 5'-phosphomonoester.. Its function is as follows. Endonuclease that specifically degrades the RNA of RNA-DNA hybrids. In Coxiella burnetii (strain CbuG_Q212) (Coxiella burnetii (strain Q212)), this protein is Ribonuclease H.